The chain runs to 154 residues: Cytochrome c' (154 aa).

The signal sequence occupies residues 1 to 23; the sequence is MKHVLASTAAGLMALGLASSAIA. Heme c contacts are provided by Arg35, Gln36, Arg95, Cys144, Cys147, and His148.

In terms of assembly, homodimer. Binds 1 heme c group covalently per subunit.

In terms of biological role, cytochrome c' is the most widely occurring bacterial c-type cytochrome. Cytochromes c' are high-spin proteins and the heme has no sixth ligand. Their exact function is not known. The chain is Cytochrome c' (cycA) from Allochromatium vinosum (strain ATCC 17899 / DSM 180 / NBRC 103801 / NCIMB 10441 / D) (Chromatium vinosum).